A 240-amino-acid chain; its full sequence is MPAGMFSIDSILAGRPSCKDSVLLHRNAPVVFSNLTESLYTAAGDFNGLYSHTGPPAPNLQSVNGRIGYNNYYYGQLHVQGPTGPACCGAIPTLGSQQCPCIPTGYDSAGSVLISPVPHQMMSYMNVGTLSRTELQLLNQLHCRRKRRHRTIFTDEQLEALENLFQETKYPDVGTREQLARKVHLREEKVEVWFKNRRAKWRRQKRSSSEESENSQKWNKSTKTTSEKIEEGKSDVDSDS.

Positions 146-205 form a DNA-binding region, homeobox; sequence KRRHRTIFTDEQLEALENLFQETKYPDVGTREQLARKVHLREEKVEVWFKNRRAKWRRQK. Residues 199–240 are disordered; the sequence is AKWRRQKRSSSEESENSQKWNKSTKTTSEKIEEGKSDVDSDS. A compositionally biased stretch (basic and acidic residues) spans 225-240; it reads TSEKIEEGKSDVDSDS.

The protein belongs to the paired homeobox family. Bicoid subfamily.

The protein resides in the nucleus. The chain is Homeobox protein goosecoid (gsc) from Danio rerio (Zebrafish).